The sequence spans 120 residues: NAD(P)H-quinone oxidoreductase subunit 3, chloroplastic (120 aa).

3 helical membrane passes run 9 to 29 (IFWAFLIISSVIPILAFLISG), 64 to 84 (MFALVFVVFDVETVFLYPWAM), and 88 to 108 (VLGVSVFIEALIFVLIPIVGS).

It belongs to the complex I subunit 3 family. As to quaternary structure, NDH is composed of at least 16 different subunits, 5 of which are encoded in the nucleus.

The protein localises to the plastid. It localises to the chloroplast thylakoid membrane. The catalysed reaction is a plastoquinone + NADH + (n+1) H(+)(in) = a plastoquinol + NAD(+) + n H(+)(out). It carries out the reaction a plastoquinone + NADPH + (n+1) H(+)(in) = a plastoquinol + NADP(+) + n H(+)(out). NDH shuttles electrons from NAD(P)H:plastoquinone, via FMN and iron-sulfur (Fe-S) centers, to quinones in the photosynthetic chain and possibly in a chloroplast respiratory chain. The immediate electron acceptor for the enzyme in this species is believed to be plastoquinone. Couples the redox reaction to proton translocation, and thus conserves the redox energy in a proton gradient. The polypeptide is NAD(P)H-quinone oxidoreductase subunit 3, chloroplastic (Liriodendron tulipifera (Tuliptree)).